The following is a 157-amino-acid chain: 2-C-methyl-D-erythritol 2,4-cyclodiphosphate synthase (157 aa).

A divalent metal cation is bound by residues D8 and H10. Residues 8–10 (DVH) and 34–35 (HS) each bind 4-CDP-2-C-methyl-D-erythritol 2-phosphate. H42 provides a ligand contact to a divalent metal cation. 4-CDP-2-C-methyl-D-erythritol 2-phosphate is bound by residues 56 to 58 (DIG), 61 to 65 (FPDTD), 100 to 106 (AQAPKMA), 132 to 135 (TTSE), F139, and R142.

This sequence belongs to the IspF family. Homotrimer. A divalent metal cation is required as a cofactor.

It catalyses the reaction 4-CDP-2-C-methyl-D-erythritol 2-phosphate = 2-C-methyl-D-erythritol 2,4-cyclic diphosphate + CMP. Its pathway is isoprenoid biosynthesis; isopentenyl diphosphate biosynthesis via DXP pathway; isopentenyl diphosphate from 1-deoxy-D-xylulose 5-phosphate: step 4/6. Functionally, involved in the biosynthesis of isopentenyl diphosphate (IPP) and dimethylallyl diphosphate (DMAPP), two major building blocks of isoprenoid compounds. Catalyzes the conversion of 4-diphosphocytidyl-2-C-methyl-D-erythritol 2-phosphate (CDP-ME2P) to 2-C-methyl-D-erythritol 2,4-cyclodiphosphate (ME-CPP) with a corresponding release of cytidine 5-monophosphate (CMP). This Photobacterium profundum (strain SS9) protein is 2-C-methyl-D-erythritol 2,4-cyclodiphosphate synthase.